A 242-amino-acid chain; its full sequence is Ubiquinone biosynthesis O-methyltransferase (242 aa).

S-adenosyl-L-methionine-binding residues include R44, G64, D85, and M129.

Belongs to the methyltransferase superfamily. UbiG/COQ3 family.

The enzyme catalyses a 3-demethylubiquinol + S-adenosyl-L-methionine = a ubiquinol + S-adenosyl-L-homocysteine + H(+). It carries out the reaction a 3-(all-trans-polyprenyl)benzene-1,2-diol + S-adenosyl-L-methionine = a 2-methoxy-6-(all-trans-polyprenyl)phenol + S-adenosyl-L-homocysteine + H(+). Its pathway is cofactor biosynthesis; ubiquinone biosynthesis. Functionally, O-methyltransferase that catalyzes the 2 O-methylation steps in the ubiquinone biosynthetic pathway. In Klebsiella pneumoniae subsp. pneumoniae (strain ATCC 700721 / MGH 78578), this protein is Ubiquinone biosynthesis O-methyltransferase.